The primary structure comprises 859 residues: Envelope glycoprotein (859 aa).

Residues 1–6 (MVSIAF) constitute a propeptide that is removed on maturation. At 7–614 (YGGIPGGIST…KDLWSHIGNW (608 aa)) the chain is on the extracellular side. Residues asparagine 40, asparagine 112, asparagine 141, asparagine 148, asparagine 186, asparagine 214, asparagine 233, asparagine 244, asparagine 340, asparagine 368, asparagine 399, asparagine 406, asparagine 411, and asparagine 422 are each glycosylated (N-linked (GlcNAc...) asparagine; by host). Residues 446–466 (FGISAIVAAIVAATAIAASAT) are fusion peptide. Asparagine 483 and asparagine 490 each carry an N-linked (GlcNAc...) asparagine; by host glycan. An immunosuppression region spans residues 498–513 (LIERQIKILYAMILQT). 2 N-linked (GlcNAc...) asparagine; by host glycosylation sites follow: asparagine 550 and asparagine 557. Coiled-coil stretches lie at residues 576-624 (ILTT…SIIK) and 663-699 (KKFH…YYKQ). Residues 615–635 (IPGLGASIIKYIVMFLLIYLL) traverse the membrane as a helical segment. The Cytoplasmic portion of the chain corresponds to 636-859 (LTSSPKILRA…TSHVSMPQYV (224 aa)). The segment at 745-764 (AAINEHKNGSGGNNPHQGSL) is disordered.

The mature envelope protein (Env) consists of a trimer of SU-TM heterodimers attached by noncovalent interactions or by a labile interchain disulfide bond. In terms of processing, specific enzymatic cleavages in vivo yield mature proteins. Envelope glycoproteins are synthesized as an inactive precursor that is N-glycosylated and processed likely by host cell furin or by a furin-like protease in the Golgi to yield the mature SU and TM proteins. The cleavage site between SU and TM requires the minimal sequence [KR]-X-[KR]-R.

The protein localises to the virion membrane. The protein resides in the host cell membrane. Functionally, the surface protein (SU) attaches the virus to the host cell by binding to its receptor. This interaction triggers the refolding of the transmembrane protein (TM) and is thought to activate its fusogenic potential by unmasking its fusion peptide. Fusion occurs at the host cell plasma membrane. Its function is as follows. The transmembrane protein (TM) acts as a class I viral fusion protein. Under the current model, the protein has at least 3 conformational states: pre-fusion native state, pre-hairpin intermediate state, and post-fusion hairpin state. During viral and target cell membrane fusion, the coiled coil regions (heptad repeats) assume a trimer-of-hairpins structure, positioning the fusion peptide in close proximity to the C-terminal region of the ectodomain. The formation of this structure appears to drive apposition and subsequent fusion of viral and target cell membranes. Membranes fusion leads to delivery of the nucleocapsid into the cytoplasm. The sequence is that of Envelope glycoprotein (env) from Equus asinus (Donkey).